The sequence spans 290 residues: Elongation factor Ts (290 aa).

An involved in Mg(2+) ion dislocation from EF-Tu region spans residues 83 to 86 (TDFV).

Belongs to the EF-Ts family.

Its subcellular location is the cytoplasm. Associates with the EF-Tu.GDP complex and induces the exchange of GDP to GTP. It remains bound to the aminoacyl-tRNA.EF-Tu.GTP complex up to the GTP hydrolysis stage on the ribosome. The sequence is that of Elongation factor Ts (tsf) from Aquifex aeolicus (strain VF5).